Consider the following 280-residue polypeptide: 4-diphosphocytidyl-2-C-methyl-D-erythritol kinase (280 aa).

Residue Lys9 is part of the active site. An ATP-binding site is contributed by 93-103; that stretch reads PVAAGLGGGSS. Asp135 is an active-site residue.

This sequence belongs to the GHMP kinase family. IspE subfamily.

The enzyme catalyses 4-CDP-2-C-methyl-D-erythritol + ATP = 4-CDP-2-C-methyl-D-erythritol 2-phosphate + ADP + H(+). It participates in isoprenoid biosynthesis; isopentenyl diphosphate biosynthesis via DXP pathway; isopentenyl diphosphate from 1-deoxy-D-xylulose 5-phosphate: step 3/6. Functionally, catalyzes the phosphorylation of the position 2 hydroxy group of 4-diphosphocytidyl-2C-methyl-D-erythritol. The protein is 4-diphosphocytidyl-2-C-methyl-D-erythritol kinase of Syntrophotalea carbinolica (strain DSM 2380 / NBRC 103641 / GraBd1) (Pelobacter carbinolicus).